Here is a 133-residue protein sequence, read N- to C-terminus: Small ribosomal subunit protein uS19 (133 aa).

It belongs to the universal ribosomal protein uS19 family.

Protein S19 forms a complex with S13 that binds strongly to the 16S ribosomal RNA. This Thermococcus onnurineus (strain NA1) protein is Small ribosomal subunit protein uS19.